The primary structure comprises 120 residues: Large ribosomal subunit protein bL19 (120 aa).

This sequence belongs to the bacterial ribosomal protein bL19 family.

This protein is located at the 30S-50S ribosomal subunit interface and may play a role in the structure and function of the aminoacyl-tRNA binding site. This Marinomonas sp. (strain MWYL1) protein is Large ribosomal subunit protein bL19.